The following is a 973-amino-acid chain: MAARWSSENVVVEFRDAQATAMSVDCLGQHAVLSGRRFLYIVNLDAPNEGHRKISRQSKWDIGAVQWNPHDSYAYYFAASSNQRVDLYKWKEGNGEVCTSLQGHTRVISDLDWSVFEPDLLVTSSVDTYIYIWDIKDTRKPTVSLSAVAGASQVKWNKKNANCLATSHDGDVRIWDKRKPSTAVEYLAAHLSKIHGLDWHPDNEYTLATSSQDNSVRFWDYRQPRKYLNILPCQVPVWKARYTPFSNGLVTVMVPQLRRENSLLLWNVFDLNTPVHTFVGHDDVVLEFQWRKQKEGSKDYQLVTWSRDQTLRMWRIDSQLQRLCANDILDGVDDLIDGISLLPEPDKALQPQDSEPQHSSGHGDEEALKEDFLNDLLVGKKTDQLGLPQTLQQEFSLINVQIRNVNVEMDAVNRSCTVSVHCGNHRVRMLVMFPVQYPNNAAPSFQFINPTSITASMKAKLLKILKDTSLQKVKRNQSCLEPCLRQLVSWLESVVNQEDSTSSNPYALPNSVTTPLPTFARVSNAYGSYQDSNIPFPRTSGARFCGAGYLVYFTRPMTMHRAVSPTEPTPRSLSALSAYHSGLITPMKIRTETPGNLRLYSGSPTRSEKEQVSISSFYYKERKSRRWKSKREGTDANNRPIKAAGKVIIQDISCLLPVHKLLGELYILNVNNIQETCQKNAASAMAVGRRDLVQVWSLAMVATDLCLGPKSDPDLEIPWAQHPFGRQLLESLLAHYSQLHDVQTLAMLCSVFEAQSRLQGCPNSYGPFPQRASNLASHSRYPSFTSSGSCSSMSDPGLGTGGWSIANKDTEQTSTPWCESSPDEFRYSNLMYPDHREREKDQHEKNKRLLDPANTQQFDDFKKCYGEILYRWGLREKRAEVLKFVSSPPDPHKGIEFGVYCSHCRSEARGTQCAICKGFTFQCAICHVAVRGSSNFCLTCGHGGHTSHMMEWFRTQEVCPTGCGCHCLLESTF.

WD repeat units lie at residues 57 to 98, 103 to 143, 146 to 185, 189 to 229, 232 to 276, and 280 to 324; these read QSKW…GEVC, GHTR…KPTV, SAVAGASQVKWNKKNANCLATSHDGDVRIWDKRKPSTAVE, AHLS…KYLN, PCQV…TPVH, and GHDD…QRLC. Residues 346 to 365 are disordered; sequence DKALQPQDSEPQHSSGHGDE. Residues 351 to 360 show a composition bias toward polar residues; it reads PQDSEPQHSS. The 102-residue stretch at 393–494 folds into the RWD domain; it reads QEFSLINVQI…RQLVSWLESV (102 aa). The C4-type zinc finger occupies 900 to 920; the sequence is YCSHCRSEARGTQCAICKGFT. Residues cysteine 901, cysteine 904, cysteine 913, cysteine 916, cysteine 926, cysteine 937, histidine 942, histidine 945, histidine 948, cysteine 959, cysteine 963, cysteine 965, and cysteine 967 each coordinate Zn(2+). The RING-type; atypical zinc finger occupies 921–970; sequence FQCAICHVAVRGSSNFCLTCGHGGHTSHMMEWFRTQEVCPTGCGCHCLLE.

This sequence belongs to the WD repeat WDR59 family. In terms of assembly, component of the GATOR2 subcomplex, composed of MIOS, SEC13, SEH1L, WDR24 and WDR59. The GATOR2 complex interacts with CASTOR1 and CASTOR2; the interaction is negatively regulated by arginine. The GATOR2 complex interacts with SESN1, SESN2 and SESN3; the interaction is negatively regulated by amino acids. Interacts with DDB1-CUL4A/B E3 ligase complexes.

The protein localises to the lysosome membrane. With respect to regulation, the GATOR2 complex is negatively regulated by the upstream amino acid sensors CASTOR1 and SESN2, which sequester the GATOR2 complex in absence of amino acids. In the presence of abundant amino acids, GATOR2 is released from CASTOR1 and SESN2 and activated. As a component of the GATOR2 complex, functions as an activator of the amino acid-sensing branch of the mTORC1 signaling pathway. The GATOR2 complex indirectly activates mTORC1 through the inhibition of the GATOR1 subcomplex. GATOR2 probably acts as an E3 ubiquitin-protein ligase toward GATOR1. In the presence of abundant amino acids, the GATOR2 complex mediates ubiquitination of the NPRL2 core component of the GATOR1 complex, leading to GATOR1 inactivation. In the absence of amino acids, GATOR2 is inhibited, activating the GATOR1 complex. This chain is GATOR2 complex protein WDR59, found in Gallus gallus (Chicken).